The following is a 195-amino-acid chain: Small ribosomal subunit protein uS5 (195 aa).

A disordered region spans residues 1-20 (MAREREGGGRGRREDREERD). Positions 23–86 (FVDKLVHINR…EAAKRGLIRV (64 aa)) constitute an S5 DRBM domain. The interval 161–195 (DSPRSVAARRGIKVSTLQSRRRDADPADQSEAAVA) is disordered.

The protein belongs to the universal ribosomal protein uS5 family. In terms of assembly, part of the 30S ribosomal subunit. Contacts proteins S4 and S8.

Functionally, with S4 and S12 plays an important role in translational accuracy. Its function is as follows. Located at the back of the 30S subunit body where it stabilizes the conformation of the head with respect to the body. This is Small ribosomal subunit protein uS5 from Methylobacterium radiotolerans (strain ATCC 27329 / DSM 1819 / JCM 2831 / NBRC 15690 / NCIMB 10815 / 0-1).